A 446-amino-acid polypeptide reads, in one-letter code: Xylose isomerase 1 (446 aa).

Catalysis depends on residues His109 and Asp112. Positions 240, 276, 279, 304, 315, 317, and 347 each coordinate Mg(2+).

The protein belongs to the xylose isomerase family. As to quaternary structure, homotetramer. Requires Mg(2+) as cofactor.

It localises to the cytoplasm. The catalysed reaction is alpha-D-xylose = alpha-D-xylulofuranose. The polypeptide is Xylose isomerase 1 (Xanthomonas campestris pv. campestris (strain 8004)).